The following is a 269-amino-acid chain: Phosphate import ATP-binding protein PstB (269 aa).

Positions Leu-14–Asn-253 constitute an ABC transporter domain. Gly-46–Ser-53 provides a ligand contact to ATP.

It belongs to the ABC transporter superfamily. Phosphate importer (TC 3.A.1.7) family. As to quaternary structure, the complex is composed of two ATP-binding proteins (PstB), two transmembrane proteins (PstC and PstA) and a solute-binding protein (PstS).

The protein resides in the cell inner membrane. The catalysed reaction is phosphate(out) + ATP + H2O = ADP + 2 phosphate(in) + H(+). Functionally, part of the ABC transporter complex PstSACB involved in phosphate import. Responsible for energy coupling to the transport system. This Prochlorococcus marinus (strain MIT 9312) protein is Phosphate import ATP-binding protein PstB.